We begin with the raw amino-acid sequence, 267 residues long: Ribosomal RNA small subunit methyltransferase A (267 aa).

Leu-20, Gly-45, Glu-68, Asp-91, and Asn-113 together coordinate S-adenosyl-L-methionine.

This sequence belongs to the class I-like SAM-binding methyltransferase superfamily. rRNA adenine N(6)-methyltransferase family. RsmA subfamily.

The protein resides in the cytoplasm. The enzyme catalyses adenosine(1518)/adenosine(1519) in 16S rRNA + 4 S-adenosyl-L-methionine = N(6)-dimethyladenosine(1518)/N(6)-dimethyladenosine(1519) in 16S rRNA + 4 S-adenosyl-L-homocysteine + 4 H(+). Its function is as follows. Specifically dimethylates two adjacent adenosines (A1518 and A1519) in the loop of a conserved hairpin near the 3'-end of 16S rRNA in the 30S particle. May play a critical role in biogenesis of 30S subunits. The protein is Ribosomal RNA small subunit methyltransferase A of Blochmanniella pennsylvanica (strain BPEN).